The chain runs to 500 residues: Lysine--tRNA ligase (500 aa).

Mg(2+)-binding residues include aspartate 412 and glutamate 419.

The protein belongs to the class-II aminoacyl-tRNA synthetase family. Homodimer. Mg(2+) is required as a cofactor.

The protein localises to the cytoplasm. The enzyme catalyses tRNA(Lys) + L-lysine + ATP = L-lysyl-tRNA(Lys) + AMP + diphosphate. The chain is Lysine--tRNA ligase from Kineococcus radiotolerans (strain ATCC BAA-149 / DSM 14245 / SRS30216).